A 95-amino-acid polypeptide reads, in one-letter code: Aspartyl/glutamyl-tRNA(Asn/Gln) amidotransferase subunit C (95 aa).

It belongs to the GatC family. Heterotrimer of A, B and C subunits.

It catalyses the reaction L-glutamyl-tRNA(Gln) + L-glutamine + ATP + H2O = L-glutaminyl-tRNA(Gln) + L-glutamate + ADP + phosphate + H(+). The catalysed reaction is L-aspartyl-tRNA(Asn) + L-glutamine + ATP + H2O = L-asparaginyl-tRNA(Asn) + L-glutamate + ADP + phosphate + 2 H(+). In terms of biological role, allows the formation of correctly charged Asn-tRNA(Asn) or Gln-tRNA(Gln) through the transamidation of misacylated Asp-tRNA(Asn) or Glu-tRNA(Gln) in organisms which lack either or both of asparaginyl-tRNA or glutaminyl-tRNA synthetases. The reaction takes place in the presence of glutamine and ATP through an activated phospho-Asp-tRNA(Asn) or phospho-Glu-tRNA(Gln). This Gluconacetobacter diazotrophicus (strain ATCC 49037 / DSM 5601 / CCUG 37298 / CIP 103539 / LMG 7603 / PAl5) protein is Aspartyl/glutamyl-tRNA(Asn/Gln) amidotransferase subunit C.